Reading from the N-terminus, the 91-residue chain is MARSIKKGPFCDAHLLKKVEAAAASRDKKPIKTWSRRSTILPDFIGLTIAVHNGRQHVPVYVTENMVGHKLGEFALTRTFKGHAADKKAKK.

This sequence belongs to the universal ribosomal protein uS19 family.

Functionally, protein S19 forms a complex with S13 that binds strongly to the 16S ribosomal RNA. The polypeptide is Small ribosomal subunit protein uS19 (Paraburkholderia phymatum (strain DSM 17167 / CIP 108236 / LMG 21445 / STM815) (Burkholderia phymatum)).